The sequence spans 589 residues: ATP-dependent lipid A-core flippase (589 aa).

5 helical membrane passes run 29-49, 70-90, 157-177, 261-281, and 283-303; these read LLLV…TGFL, WLPV…YITD, VIGA…TILV, MIGA…ALAG, and LTAG…PGLK. The region spanning 32–314 is the ABC transmembrane type-1 domain; it reads VAALIAALIE…LTNVQNMVQR (283 aa). In terms of domain architecture, ABC transporter spans 346 to 582; that stretch reads IEFRDVTARY…GGLYSHLHGM (237 aa). Residue 380 to 387 participates in ATP binding; the sequence is GRSGSGKS.

Belongs to the ABC transporter superfamily. Lipid exporter (TC 3.A.1.106) family. In terms of assembly, homodimer.

Its subcellular location is the cell inner membrane. The catalysed reaction is ATP + H2O + lipid A-core oligosaccharideSide 1 = ADP + phosphate + lipid A-core oligosaccharideSide 2.. Functionally, involved in lipopolysaccharide (LPS) biosynthesis. Translocates lipid A-core from the inner to the outer leaflet of the inner membrane. Transmembrane domains (TMD) form a pore in the inner membrane and the ATP-binding domain (NBD) is responsible for energy generation. This Xanthomonas axonopodis pv. citri (strain 306) protein is ATP-dependent lipid A-core flippase.